Consider the following 373-residue polypeptide: Glutamate 5-kinase (373 aa).

Lys15 is an ATP binding site. Positions 55, 142, and 154 each coordinate substrate. ATP contacts are provided by residues 174–175 (TD) and 216–222 (TGGMATK). The region spanning 281-359 (AGRIIVDDGA…SRIEAILGYR (79 aa)) is the PUA domain.

Belongs to the glutamate 5-kinase family.

It localises to the cytoplasm. It carries out the reaction L-glutamate + ATP = L-glutamyl 5-phosphate + ADP. Its pathway is amino-acid biosynthesis; L-proline biosynthesis; L-glutamate 5-semialdehyde from L-glutamate: step 1/2. Functionally, catalyzes the transfer of a phosphate group to glutamate to form L-glutamate 5-phosphate. In Pelobacter propionicus (strain DSM 2379 / NBRC 103807 / OttBd1), this protein is Glutamate 5-kinase.